A 468-amino-acid chain; its full sequence is MKNFMDENFLLQTETAQKLYHEHAAKMPIIDYHCHLIPQMVADDYKFKSLTEIWLGGDHYKWRAMRTNGVDERYCTGKDTTDWEKFEKWAETVPYTFRNPLYHWTHLELKTAFGIDKILSPKTAREIYDECNEKLAQPEYSARGMMRRYHVEVVCTTDDPIDSLEYHIQTRESGFEIKMLPTWRPDKAMAVEVPADFRAYVEKLSAVSGVTISNFDDMIAALRKRHDFFAEQGCRLSDHGIEEFYAEDYTDAEIKAIFNKVYGGAELTKEEILKFKSAMLVIFGEMDWEKGWTQQFHYGAIRNNNTKMFKLLGPDTGFDSIGEFTTAKAMSKFLDRLNVNGKLTKTILYNLNPCANEVIATMLGNFQDGSIAGKIQFGSGWWFLDQKDGMEKQMNALSVLGLLSRFVGMLTDSRSFLSYPRHEYFRRTLCNLVGRDVENGEIPVSEMDRVNQMIEDISYNNAKNFFKF.

This sequence belongs to the metallo-dependent hydrolases superfamily. Uronate isomerase family.

The catalysed reaction is D-glucuronate = D-fructuronate. It carries out the reaction aldehydo-D-galacturonate = keto-D-tagaturonate. It participates in carbohydrate metabolism; pentose and glucuronate interconversion. This is Uronate isomerase from Bacteroides thetaiotaomicron (strain ATCC 29148 / DSM 2079 / JCM 5827 / CCUG 10774 / NCTC 10582 / VPI-5482 / E50).